A 550-amino-acid chain; its full sequence is Arginine--tRNA ligase (550 aa).

The short motif at 130-140 (ANPTGPIHLGG) is the 'HIGH' region element.

The protein belongs to the class-I aminoacyl-tRNA synthetase family. In terms of assembly, monomer.

It localises to the cytoplasm. It carries out the reaction tRNA(Arg) + L-arginine + ATP = L-arginyl-tRNA(Arg) + AMP + diphosphate. The sequence is that of Arginine--tRNA ligase from Rhodococcus erythropolis (strain PR4 / NBRC 100887).